A 348-amino-acid chain; its full sequence is MLLRMALCLTVSTILCAGFASNLMDILRRPVNQVWDMFEESHLPAGIGLDAWSKAKEMATAMTSLGASQRALFLRQVSPSQADLTEAALVLRGAQPLPEDRKQVFIREGSPSTAVRDLAEALYSKGAVLADGTGRGALKMMSAFQPGEAFMLTIKLSLYAGVVISFPLLLYFLLQFIIPGLLEHERKLLYKCMAVGFGLFLAGTLFCYFIVLPRVLTFFYTYSLEFGISNEWRIGYYLSFATQMILMFGLAFELPVVVMPFVKLGVLTYDMMKSTRRYAIVAIAVLAAVITPTPDVATMMLMAVPMYALYEICIILAWMHERKEAARTREEIARFEEDFNNNNSPYNQ.

6 helical membrane-spanning segments follow: residues 7 to 27 (LCLTVSTILCAGFASNLMDIL), 162 to 182 (VVISFPLLLYFLLQFIIPGLL), 192 to 212 (CMAVGFGLFLAGTLFCYFIVL), 244 to 264 (MILMFGLAFELPVVVMPFVKL), 278 to 298 (YAIVAIAVLAAVITPTPDVAT), and 299 to 319 (MMLMAVPMYALYEICIILAWM).

This sequence belongs to the TatC family. In terms of assembly, forms a complex with TatA.

It is found in the cell membrane. Its function is as follows. Part of the twin-arginine translocation (Tat) system that transports large folded proteins containing a characteristic twin-arginine motif in their signal peptide across membranes. In Akkermansia muciniphila (strain ATCC BAA-835 / DSM 22959 / JCM 33894 / BCRC 81048 / CCUG 64013 / CIP 107961 / Muc), this protein is Sec-independent protein translocase protein TatC.